A 421-amino-acid polypeptide reads, in one-letter code: Ribulose bisphosphate carboxylase large chain (421 aa).

The substrate site is built by Asn-68 and Thr-118. Residue Lys-120 is the Proton acceptor of the active site. Lys-122 contributes to the substrate binding site. 3 residues coordinate Mg(2+): Lys-146, Asp-148, and Glu-149. Position 146 is an N6-carboxylysine (Lys-146). The active-site Proton acceptor is His-239. Residues Arg-240, His-272, and Ser-324 each coordinate substrate.

Belongs to the RuBisCO large chain family. Type I subfamily. As to quaternary structure, heterohexadecamer of 8 large chains and 8 small chains; disulfide-linked. The disulfide link is formed within the large subunit homodimers. Requires Mg(2+) as cofactor. In terms of processing, the disulfide bond which can form in the large chain dimeric partners within the hexadecamer appears to be associated with oxidative stress and protein turnover.

The protein localises to the plastid. Its subcellular location is the chloroplast. It carries out the reaction 2 (2R)-3-phosphoglycerate + 2 H(+) = D-ribulose 1,5-bisphosphate + CO2 + H2O. The enzyme catalyses D-ribulose 1,5-bisphosphate + O2 = 2-phosphoglycolate + (2R)-3-phosphoglycerate + 2 H(+). Functionally, ruBisCO catalyzes two reactions: the carboxylation of D-ribulose 1,5-bisphosphate, the primary event in carbon dioxide fixation, as well as the oxidative fragmentation of the pentose substrate in the photorespiration process. Both reactions occur simultaneously and in competition at the same active site. The protein is Ribulose bisphosphate carboxylase large chain (rbcL) of Aegilops tauschii (Tausch's goatgrass).